The following is a 76-amino-acid chain: Acyl carrier protein (76 aa).

Positions 1 to 76 (MSIEERVKKI…SAIDYVQNNQ (76 aa)) constitute a Carrier domain. Position 36 is an O-(pantetheine 4'-phosphoryl)serine (serine 36).

It belongs to the acyl carrier protein (ACP) family. 4'-phosphopantetheine is transferred from CoA to a specific serine of apo-ACP by AcpS. This modification is essential for activity because fatty acids are bound in thioester linkage to the sulfhydryl of the prosthetic group.

Its subcellular location is the cytoplasm. It participates in lipid metabolism; fatty acid biosynthesis. In terms of biological role, carrier of the growing fatty acid chain in fatty acid biosynthesis. This Haemophilus influenzae (strain 86-028NP) protein is Acyl carrier protein.